The following is a 171-amino-acid chain: MSKKSGLSFLWLSAVAFVIDLLTKYIVVQKFDLYESVNVLPVFNLTYVRNYGAAFSFLADHSGWQQYFFILLALAISGMLVYFLAKNNAEQKIQNSAYALIIGGALANMVDRAYNGFVVDFFDFYWDIYHYPVFNIADIAICIGAGLLVLDAFKSEKKKVQDKQVEKCGQK.

3 helical membrane passes run 8–28 (SFLWLSAVAFVIDLLTKYIVV), 64–84 (WQQYFFILLALAISGMLVYFL), and 99–119 (ALIIGGALANMVDRAYNGFVV). Residues aspartate 120 and aspartate 138 contribute to the active site. Residues 133–153 (VFNIADIAICIGAGLLVLDAF) traverse the membrane as a helical segment.

It belongs to the peptidase A8 family.

Its subcellular location is the cell inner membrane. It catalyses the reaction Release of signal peptides from bacterial membrane prolipoproteins. Hydrolyzes -Xaa-Yaa-Zaa-|-(S,diacylglyceryl)Cys-, in which Xaa is hydrophobic (preferably Leu), and Yaa (Ala or Ser) and Zaa (Gly or Ala) have small, neutral side chains.. The protein operates within protein modification; lipoprotein biosynthesis (signal peptide cleavage). This protein specifically catalyzes the removal of signal peptides from prolipoproteins. This Haemophilus influenzae (strain ATCC 51907 / DSM 11121 / KW20 / Rd) protein is Lipoprotein signal peptidase.